The primary structure comprises 384 residues: PqqA peptide cyclase (384 aa).

A Radical SAM core domain is found at 5-220 (VGLPLWLLAE…TNEYREKLKA (216 aa)). [4Fe-4S] cluster-binding residues include Cys19, Cys23, and Cys26.

This sequence belongs to the radical SAM superfamily. PqqE family. Interacts with PqqD. The interaction is necessary for activity of PqqE. The cofactor is [4Fe-4S] cluster.

It carries out the reaction [PQQ precursor protein] + S-adenosyl-L-methionine = E-Y cross-linked-[PQQ precursor protein] + 5'-deoxyadenosine + L-methionine + H(+). Its pathway is cofactor biosynthesis; pyrroloquinoline quinone biosynthesis. Catalyzes the cross-linking of a glutamate residue and a tyrosine residue in the PqqA protein as part of the biosynthesis of pyrroloquinoline quinone (PQQ). The protein is PqqA peptide cyclase of Acinetobacter baumannii (strain AB0057).